A 79-amino-acid polypeptide reads, in one-letter code: Large ribosomal subunit protein uL22 (79 aa).

It belongs to the universal ribosomal protein uL22 family. Part of the 50S ribosomal subunit.

In terms of biological role, this protein binds specifically to 23S rRNA; its binding is stimulated by other ribosomal proteins, e.g. L4, L17, and L20. It is important during the early stages of 50S assembly. It makes multiple contacts with different domains of the 23S rRNA in the assembled 50S subunit and ribosome. The globular domain of the protein is located near the polypeptide exit tunnel on the outside of the subunit, while an extended beta-hairpin is found that lines the wall of the exit tunnel in the center of the 70S ribosome. The sequence is that of Large ribosomal subunit protein uL22 (rplV) from Prunus armeniaca phytoplasma.